Reading from the N-terminus, the 203-residue chain is MLILASASQSRKKLLENCQIEFIQIASKFDETTIQEKNIFNLALELSFQKANSLSENIQNLSLPEEFNYGTMEILGCDSIFEFKGEAYGKPSNKEEAFIRWKKMSGEFGFLHTGHTLIIGNFDSTSNIFKITEIIKKTVSSRVYFSNLEDWEIKSYVDTNEPLYCAGGFALEGIGGKYIEKIEGCFSNVMGLSLPWLRENLYR.

The active-site Proton acceptor is Asp-78.

Belongs to the Maf family. A divalent metal cation is required as a cofactor.

The protein resides in the cytoplasm. The enzyme catalyses a ribonucleoside 5'-triphosphate + H2O = a ribonucleoside 5'-phosphate + diphosphate + H(+). The catalysed reaction is a 2'-deoxyribonucleoside 5'-triphosphate + H2O = a 2'-deoxyribonucleoside 5'-phosphate + diphosphate + H(+). Nucleoside triphosphate pyrophosphatase. May have a dual role in cell division arrest and in preventing the incorporation of modified nucleotides into cellular nucleic acids. This is Nucleoside triphosphate pyrophosphatase from Prochlorococcus marinus (strain AS9601).